We begin with the raw amino-acid sequence, 374 residues long: uncharacterized protein (374 aa).

Positions 1-21 (MSIISRVCIPCAVLLFAQLHA) are cleaved as a signal peptide. Residues 22-102 (KELVHVSQLK…ASASAWTSLS (81 aa)) enclose the Fibronectin type-III domain.

This is an uncharacterized protein from Treponema pallidum (strain Nichols).